The sequence spans 93 residues: Stromal cell-derived factor 1 (93 aa).

The first 21 residues, 1–21 (MDIRTLALFSILLGSLCLSEG), serve as a signal peptide directing secretion. Positions 22 to 23 (KP) match the Receptor activation motif motif. The segment at 29 to 33 (RCPCR) is receptor and heparin binding. Intrachain disulfides connect Cys-30/Cys-55 and Cys-32/Cys-71. Heparin-binding positions include 41–51 (KSNIKHLKILS), Arg-62, Gln-69, and Lys-85. Receptor binding stretches follow at residues 48 to 50 (KIL) and 60 to 64 (VARLK).

This sequence belongs to the intercrine alpha (chemokine CxC) family. Monomer or homodimer; in equilibrium. Dimer formation is induced by non acidic pH and the presence of multivalent anions, and by binding to cxcr4 or heparin.

The protein resides in the secreted. Chemoattractant. Activates the C-X-C chemokine receptor cxcr4 to induce a rapid and transient rise in the level of intracellular calcium ions, and chemotaxis. Signaling with cxcr4 mediates the directional movement of mesodermal cells during gastrulation. Binds to the allosteric site (site 2) of integrins and activates them in a cxcr4-independent manner. The protein is Stromal cell-derived factor 1 of Xenopus tropicalis (Western clawed frog).